The primary structure comprises 344 residues: UDP-N-acetylglucosamine--N-acetylmuramyl-(pentapeptide) pyrophosphoryl-undecaprenol N-acetylglucosamine transferase (344 aa).

UDP-N-acetyl-alpha-D-glucosamine contacts are provided by residues 9–11, asparagine 118, arginine 157, serine 188, and glutamine 282; that span reads TGG.

Belongs to the glycosyltransferase 28 family. MurG subfamily.

It localises to the cell inner membrane. The catalysed reaction is di-trans,octa-cis-undecaprenyl diphospho-N-acetyl-alpha-D-muramoyl-L-alanyl-D-glutamyl-meso-2,6-diaminopimeloyl-D-alanyl-D-alanine + UDP-N-acetyl-alpha-D-glucosamine = di-trans,octa-cis-undecaprenyl diphospho-[N-acetyl-alpha-D-glucosaminyl-(1-&gt;4)]-N-acetyl-alpha-D-muramoyl-L-alanyl-D-glutamyl-meso-2,6-diaminopimeloyl-D-alanyl-D-alanine + UDP + H(+). It participates in cell wall biogenesis; peptidoglycan biosynthesis. Functionally, cell wall formation. Catalyzes the transfer of a GlcNAc subunit on undecaprenyl-pyrophosphoryl-MurNAc-pentapeptide (lipid intermediate I) to form undecaprenyl-pyrophosphoryl-MurNAc-(pentapeptide)GlcNAc (lipid intermediate II). In Aquifex aeolicus (strain VF5), this protein is UDP-N-acetylglucosamine--N-acetylmuramyl-(pentapeptide) pyrophosphoryl-undecaprenol N-acetylglucosamine transferase.